The chain runs to 210 residues: Large ribosomal subunit protein uL4 (210 aa).

This sequence belongs to the universal ribosomal protein uL4 family. Part of the 50S ribosomal subunit.

Its function is as follows. One of the primary rRNA binding proteins, this protein initially binds near the 5'-end of the 23S rRNA. It is important during the early stages of 50S assembly. It makes multiple contacts with different domains of the 23S rRNA in the assembled 50S subunit and ribosome. Forms part of the polypeptide exit tunnel. The polypeptide is Large ribosomal subunit protein uL4 (Orientia tsutsugamushi (strain Boryong) (Rickettsia tsutsugamushi)).